Reading from the N-terminus, the 204-residue chain is NADH-ubiquinone oxidoreductase chain 6 (204 aa).

5 helical membrane-spanning segments follow: residues 5–25, 29–49, 56–76, 91–111, and 151–171; these read IFLFYLFSIFALISSLMVIGL, VHSVLFLILVFCNVAGLLLLL, FMLIIVYVGAIAVLFLFVVMM, LWPIGILTFVILLSQFFSSFY, and LLFLICGLILLVAMIGVIVLT.

This sequence belongs to the complex I subunit 6 family.

The protein resides in the mitochondrion membrane. The catalysed reaction is a ubiquinone + NADH + 5 H(+)(in) = a ubiquinol + NAD(+) + 4 H(+)(out). In terms of biological role, core subunit of the mitochondrial membrane respiratory chain NADH dehydrogenase (Complex I) that is believed to belong to the minimal assembly required for catalysis. Complex I functions in the transfer of electrons from NADH to the respiratory chain. The immediate electron acceptor for the enzyme is believed to be ubiquinone. The chain is NADH-ubiquinone oxidoreductase chain 6 (ND6) from Chondrus crispus (Carrageen Irish moss).